A 122-amino-acid chain; its full sequence is Large ribosomal subunit protein uL14 (122 aa).

The protein belongs to the universal ribosomal protein uL14 family. As to quaternary structure, part of the 50S ribosomal subunit. Forms a cluster with proteins L3 and L19. In the 70S ribosome, L14 and L19 interact and together make contacts with the 16S rRNA in bridges B5 and B8.

In terms of biological role, binds to 23S rRNA. Forms part of two intersubunit bridges in the 70S ribosome. This Macrococcus caseolyticus (strain JCSC5402) (Macrococcoides caseolyticum) protein is Large ribosomal subunit protein uL14.